The sequence spans 764 residues: 1,4-alpha-glucan branching enzyme GlgB (764 aa).

Aspartate 434 serves as the catalytic Nucleophile. Glutamate 487 serves as the catalytic Proton donor.

It belongs to the glycosyl hydrolase 13 family. GlgB subfamily. In terms of assembly, monomer.

The catalysed reaction is Transfers a segment of a (1-&gt;4)-alpha-D-glucan chain to a primary hydroxy group in a similar glucan chain.. The protein operates within glycan biosynthesis; glycogen biosynthesis. Its function is as follows. Catalyzes the formation of the alpha-1,6-glucosidic linkages in glycogen by scission of a 1,4-alpha-linked oligosaccharide from growing alpha-1,4-glucan chains and the subsequent attachment of the oligosaccharide to the alpha-1,6 position. This Nostoc sp. (strain PCC 7120 / SAG 25.82 / UTEX 2576) protein is 1,4-alpha-glucan branching enzyme GlgB.